The chain runs to 362 residues: HMG box-containing protein C19G7.04 (362 aa).

A SprT-like domain is found at 135–299 (KCFLARLEDE…RLCKSQIKQI (165 aa)). A DNA-binding region (HMG box) is located at residues 306–348 (PNAFQIFLKENSKRLRKLHPHITHKELMKKLSDEYHRTKDAKQ).

It is found in the nucleus. The protein resides in the cytoplasm. It localises to the cytoskeleton. The protein localises to the spindle. The sequence is that of HMG box-containing protein C19G7.04 from Schizosaccharomyces pombe (strain 972 / ATCC 24843) (Fission yeast).